A 617-amino-acid polypeptide reads, in one-letter code: Melatonin-related receptor (617 aa).

Topologically, residues 1-30 are extracellular; sequence MGPTLAVPTPYGCIGCKLPQPEYPPALIIF. The helical transmembrane segment at 31–51 threads the bilayer; it reads MFCAMVITIVVDLIGNSMVIL. The Cytoplasmic segment spans residues 52–64; that stretch reads AVTKNKKLRNSGN. A helical membrane pass occupies residues 65–85; it reads IFVVSLSVADMLVAIYPYPLM. Topologically, residues 86–103 are extracellular; that stretch reads LHAMSIGGWDLSQLQCQM. Cysteines 101 and 178 form a disulfide. A helical membrane pass occupies residues 104-124; the sequence is VGFITGLSVVGSIFNIVAIAI. Residues 125–143 are Cytoplasmic-facing; it reads NRYCYICHSLQYERIFSVR. The chain crosses the membrane as a helical span at residues 144-164; it reads NTCIYLVITWIMTVLAVLPNM. The Extracellular portion of the chain corresponds to 165–188; sequence YIGTIEYDPRTYTCIFNYLNNPVF. Residues 189–209 traverse the membrane as a helical segment; the sequence is TVTIVCIHFVLPLLIVGFCYV. At 210-239 the chain is on the cytoplasmic side; that stretch reads RIWTKVLAARDPAGQNPDNQLAEVRNFLTM. Residues 240–260 traverse the membrane as a helical segment; the sequence is FVIFLLFAVCWCPINVLTVLV. At 261-273 the chain is on the extracellular side; it reads AVSPKEMAGKIPN. The helical transmembrane segment at 274-294 threads the bilayer; the sequence is WLYLAAYFIAYFNSCLNAVIY. Over 295–617 the chain is Cytoplasmic; the sequence is GLLNENFRRE…VEDDPDEMAV (323 aa). Disordered regions lie at residues 340–438 and 464–596; these read AHAR…ATVY and SVHF…VTTS. Positions 341 to 353 are enriched in basic and acidic residues; sequence HARDQAREQDRAH. Polar residues predominate over residues 485–500; it reads GSHSKSAFSAATSHPK.

Belongs to the G-protein coupled receptor 1 family. Homodimer, and heterodimer with MTNR1A and MTNR1B. Interacts with KAT5. Interacts with RTN4 isoform A/NOGO-A. Interacts with TGFBR1. As to quaternary structure, interacts with GTF2I. In terms of processing, cleaved by CAPN1 in a calcium-dependent manner. As to expression, hypothalamus and pituitary.

Its subcellular location is the cell membrane. The protein localises to the postsynaptic density. It is found in the nucleus. Functionally, g protein-coupled receptor that plays a role in numerous physiological processes including regulation of energy metabolism, neurite outgrowth or cell migration. Promotes self-renewal and neuronal differentiation of neural progenitor cells through activation of the NOTCH and WNT/beta-catenin signaling pathways. Modulates the KAT5-dependent glucocorticoid receptor signaling by modulating KAT5 subcellular compartmentalisation. Also plays a role in the activation TGFBR1 in the absence of TGFBR2 by interfering with FKBP1A binding to TGFBR1, leading to induction of both canonical and non-canonical SMAD signaling pathways resulting in inhibition of proliferation or promotion of migration. Upon cleavage by CAPN1, functions as a scaffold in the nucleus for interacting partners such as GTF2I to promote FOS promoter activation. This chain is Melatonin-related receptor (GPR50), found in Homo sapiens (Human).